The following is a 302-amino-acid chain: tRNA-cytidine(32) 2-sulfurtransferase (302 aa).

A PP-loop motif motif is present at residues 57–62; sequence SGGKDS. Cysteine 132, cysteine 135, and cysteine 223 together coordinate [4Fe-4S] cluster.

The protein belongs to the TtcA family. Homodimer. Mg(2+) is required as a cofactor. [4Fe-4S] cluster serves as cofactor.

Its subcellular location is the cytoplasm. It catalyses the reaction cytidine(32) in tRNA + S-sulfanyl-L-cysteinyl-[cysteine desulfurase] + AH2 + ATP = 2-thiocytidine(32) in tRNA + L-cysteinyl-[cysteine desulfurase] + A + AMP + diphosphate + H(+). The protein operates within tRNA modification. Functionally, catalyzes the ATP-dependent 2-thiolation of cytidine in position 32 of tRNA, to form 2-thiocytidine (s(2)C32). The sulfur atoms are provided by the cysteine/cysteine desulfurase (IscS) system. The polypeptide is tRNA-cytidine(32) 2-sulfurtransferase (Marinobacter nauticus (strain ATCC 700491 / DSM 11845 / VT8) (Marinobacter aquaeolei)).